The primary structure comprises 217 residues: Deoxyribose-phosphate aldolase (217 aa).

D89 serves as the catalytic Proton donor/acceptor. The Schiff-base intermediate with acetaldehyde role is filled by K151. The active-site Proton donor/acceptor is the K180.

It belongs to the DeoC/FbaB aldolase family. DeoC type 1 subfamily.

It is found in the cytoplasm. The catalysed reaction is 2-deoxy-D-ribose 5-phosphate = D-glyceraldehyde 3-phosphate + acetaldehyde. The protein operates within carbohydrate degradation; 2-deoxy-D-ribose 1-phosphate degradation; D-glyceraldehyde 3-phosphate and acetaldehyde from 2-deoxy-alpha-D-ribose 1-phosphate: step 2/2. Its function is as follows. Catalyzes a reversible aldol reaction between acetaldehyde and D-glyceraldehyde 3-phosphate to generate 2-deoxy-D-ribose 5-phosphate. This is Deoxyribose-phosphate aldolase from Mycoplasma mobile (strain ATCC 43663 / 163K / NCTC 11711) (Mesomycoplasma mobile).